We begin with the raw amino-acid sequence, 460 residues long: Wadjet protein JetA (460 aa).

In terms of biological role, component of antiplasmid transformation system Wadjet type I, composed of JetA, JetB, JetC and JetD. Expression of Wadjet type I in B.subtilis (strain BEST7003) reduces the transformation efficiency of plasmid pHCMC05. The protein is Wadjet protein JetA of Bacillus cereus (strain Q1).